A 422-amino-acid polypeptide reads, in one-letter code: Tyrosine--tRNA ligase (422 aa).

Tyrosine 36 is an L-tyrosine binding site. The short motif at proline 41–histidine 50 is the 'HIGH' region element. L-tyrosine contacts are provided by tyrosine 174 and glutamine 178. Residues lysine 234–threonine 238 carry the 'KMSKS' region motif. An ATP-binding site is contributed by lysine 237. In terms of domain architecture, S4 RNA-binding spans threonine 356–tryptophan 420.

The protein belongs to the class-I aminoacyl-tRNA synthetase family. TyrS type 1 subfamily. As to quaternary structure, homodimer.

The protein localises to the cytoplasm. The catalysed reaction is tRNA(Tyr) + L-tyrosine + ATP = L-tyrosyl-tRNA(Tyr) + AMP + diphosphate + H(+). Its function is as follows. Catalyzes the attachment of tyrosine to tRNA(Tyr) in a two-step reaction: tyrosine is first activated by ATP to form Tyr-AMP and then transferred to the acceptor end of tRNA(Tyr). This chain is Tyrosine--tRNA ligase, found in Aeromonas hydrophila subsp. hydrophila (strain ATCC 7966 / DSM 30187 / BCRC 13018 / CCUG 14551 / JCM 1027 / KCTC 2358 / NCIMB 9240 / NCTC 8049).